The primary structure comprises 274 residues: Penicillin-insensitive murein endopeptidase (274 aa).

The N-terminal stretch at 1 to 19 (MNKTAIALLALLASSASLA) is a signal peptide. 3 disulfides stabilise this stretch: cysteine 44-cysteine 265, cysteine 187-cysteine 235, and cysteine 216-cysteine 223. Residues histidine 110, histidine 113, aspartate 120, aspartate 147, histidine 150, and histidine 211 each contribute to the Zn(2+) site. Positions 228-264 (LPPPGDGCGAELQSWFAPPKPGTTKPEKKTPSPLPPS) are disordered.

The protein belongs to the peptidase M74 family. Dimer. Zn(2+) is required as a cofactor.

The protein resides in the periplasm. In terms of biological role, murein endopeptidase that cleaves the D-alanyl-meso-2,6-diamino-pimelyl amide bond that connects peptidoglycan strands. Likely plays a role in the removal of murein from the sacculus. This chain is Penicillin-insensitive murein endopeptidase, found in Escherichia coli (strain 55989 / EAEC).